Here is a 194-residue protein sequence, read N- to C-terminus: Large ribosomal subunit protein bL9c (194 aa).

The N-terminal 39 residues, 1–39 (MASSTLSSLSSTPLQHSFAANLKTCSQFPNKSSGFMVFA), are a transit peptide targeting the chloroplast.

It belongs to the bacterial ribosomal protein bL9 family. In terms of assembly, part of the 50S ribosomal subunit.

It is found in the plastid. The protein localises to the chloroplast. Functionally, binds to the 23S rRNA. This chain is Large ribosomal subunit protein bL9c (RPL9), found in Pisum sativum (Garden pea).